The sequence spans 248 residues: UPF0280 protein Maeo_0343 (248 aa).

The protein belongs to the UPF0280 family.

The chain is UPF0280 protein Maeo_0343 from Methanococcus aeolicus (strain ATCC BAA-1280 / DSM 17508 / OCM 812 / Nankai-3).